The following is a 129-amino-acid chain: uncharacterized protein (129 aa).

The segment covering Ala-91–Ser-114 has biased composition (basic and acidic residues). The disordered stretch occupies residues Ala-91–Lys-129.

Belongs to the LEA type 1 family.

This is an uncharacterized protein from Haemophilus influenzae (strain ATCC 51907 / DSM 11121 / KW20 / Rd).